Here is a 352-residue protein sequence, read N- to C-terminus: C5a anaphylatoxin chemotactic receptor 1 (352 aa).

Residues 1–11 are compositionally biased toward polar residues; the sequence is MDPISNDSSEI. The disordered stretch occupies residues 1-20; that stretch reads MDPISNDSSEITYDYSDGTP. Residues 1-38 lie on the Extracellular side of the membrane; the sequence is MDPISNDSSEITYDYSDGTPNPDMPADGVYIPKMEPGD. Asn6 carries an N-linked (GlcNAc...) asparagine glycan. Tyr13 and Tyr15 each carry sulfotyrosine. A helical transmembrane segment spans residues 39–65; the sequence is IAALIIYLAVFLVGVTGNALVVWVTAF. Residues 66–70 are Cytoplasmic-facing; that stretch reads EAKRT. Residues 71–94 form a helical membrane-spanning segment; it reads VNAIWFLNLAVADLLSCLALPILF. At 95 to 111 the chain is on the extracellular side; sequence TSIVKHNHWPFGDQACI. Cys110 and Cys189 are oxidised to a cystine. Residues 112 to 133 form a helical membrane-spanning segment; the sequence is VLPSLILLNMYSSILLLATISA. Residues 134-154 are Cytoplasmic-facing; sequence DRFLLVFKPIWCQKFRRPGLA. A helical membrane pass occupies residues 155–175; that stretch reads WMACGVTWVLALLLTIPSFVF. Residues 176–202 lie on the Extracellular side of the membrane; sequence RRIHKDPYSDSILCNIDYSKGPFFIEK. A helical transmembrane segment spans residues 203-228; that stretch reads AIAILRLMVGFVLPLLTLNICYTFLL. At 229 to 244 the chain is on the cytoplasmic side; it reads IRTWSRKATRSTKTLK. The chain crosses the membrane as a helical span at residues 245 to 267; sequence VVMAVVTCFFVFWLPYQVTGVIL. Residues 268–284 are Extracellular-facing; that stretch reads AWLPRSSSTFQSVERLN. The chain crosses the membrane as a helical span at residues 285–305; it reads SLCVSLAYINCCVNPIIYVMA. The Cytoplasmic segment spans residues 306–352; it reads GQGFHGRLRRSLPSIIRNVLSEDSLGRDSKSFTRSTMDTSTQKSQAV. Phosphoserine occurs at positions 316, 319, 326, 329, 334, 336, and 340. The tract at residues 332-352 is disordered; it reads RDSKSFTRSTMDTSTQKSQAV. Residues 337–352 show a composition bias toward polar residues; the sequence is FTRSTMDTSTQKSQAV.

Belongs to the G-protein coupled receptor 1 family. Homodimer. May also form higher-order oligomers. Interacts (when phosphorylated) with ARRB1 and ARRB2; the interaction is associated with internalization of C5aR. In terms of processing, sulfation plays a critical role in the association of C5aR with C5a, but no significant role in the ability of the receptor to transduce a signal and mobilize calcium in response to a small peptide agonist. Phosphorylated on serine residues in response to C5a binding, resulting in internalization of the receptor and short-term desensitization to the ligand.

It is found in the cell membrane. The protein localises to the cytoplasmic vesicle. Receptor for the chemotactic and inflammatory peptide anaphylatoxin C5a. The ligand interacts with at least two sites on the receptor: a high-affinity site on the extracellular N-terminus, and a second site in the transmembrane region which activates downstream signaling events. Receptor activation stimulates chemotaxis, granule enzyme release, intracellular calcium release and superoxide anion production. The polypeptide is C5a anaphylatoxin chemotactic receptor 1 (C5ar1) (Rattus norvegicus (Rat)).